A 166-amino-acid polypeptide reads, in one-letter code: Small ribosomal subunit protein uS5 (166 aa).

In terms of domain architecture, S5 DRBM spans Tyr12 to Val75.

This sequence belongs to the universal ribosomal protein uS5 family. Part of the 30S ribosomal subunit. Contacts proteins S4 and S8.

With S4 and S12 plays an important role in translational accuracy. Its function is as follows. Located at the back of the 30S subunit body where it stabilizes the conformation of the head with respect to the body. This Pseudomonas entomophila (strain L48) protein is Small ribosomal subunit protein uS5.